The primary structure comprises 301 residues: 33 kDa chaperonin (301 aa).

Disulfide bonds link Cys244/Cys246 and Cys277/Cys280.

It belongs to the HSP33 family. In terms of processing, under oxidizing conditions two disulfide bonds are formed involving the reactive cysteines. Under reducing conditions zinc is bound to the reactive cysteines and the protein is inactive.

The protein localises to the cytoplasm. Its function is as follows. Redox regulated molecular chaperone. Protects both thermally unfolding and oxidatively damaged proteins from irreversible aggregation. Plays an important role in the bacterial defense system toward oxidative stress. This chain is 33 kDa chaperonin, found in Geobacter sulfurreducens (strain ATCC 51573 / DSM 12127 / PCA).